The chain runs to 241 residues: UDP-2,3-diacylglucosamine hydrolase (241 aa).

Residues Asp8, His10, Asp41, Asn79, and His114 each contribute to the Mn(2+) site. 79–80 (NR) is a binding site for substrate. Positions 122, 160, 167, and 195 each coordinate substrate. Positions 195 and 197 each coordinate Mn(2+).

The protein belongs to the LpxH family. Requires Mn(2+) as cofactor.

It is found in the cell inner membrane. The catalysed reaction is UDP-2-N,3-O-bis[(3R)-3-hydroxytetradecanoyl]-alpha-D-glucosamine + H2O = 2-N,3-O-bis[(3R)-3-hydroxytetradecanoyl]-alpha-D-glucosaminyl 1-phosphate + UMP + 2 H(+). The protein operates within glycolipid biosynthesis; lipid IV(A) biosynthesis; lipid IV(A) from (3R)-3-hydroxytetradecanoyl-[acyl-carrier-protein] and UDP-N-acetyl-alpha-D-glucosamine: step 4/6. Its function is as follows. Hydrolyzes the pyrophosphate bond of UDP-2,3-diacylglucosamine to yield 2,3-diacylglucosamine 1-phosphate (lipid X) and UMP by catalyzing the attack of water at the alpha-P atom. Involved in the biosynthesis of lipid A, a phosphorylated glycolipid that anchors the lipopolysaccharide to the outer membrane of the cell. In Azotobacter vinelandii (strain DJ / ATCC BAA-1303), this protein is UDP-2,3-diacylglucosamine hydrolase.